Consider the following 201-residue polypeptide: Recombination protein RecR (201 aa).

The C4-type zinc-finger motif lies at 60–75; that stretch reads CSCCGNVDTIDPCTVC. The 96-residue stretch at 83–178 folds into the Toprim domain; sequence SMIIVVEDVS…KTTRLAHGVP (96 aa).

The protein belongs to the RecR family.

Its function is as follows. May play a role in DNA repair. It seems to be involved in an RecBC-independent recombinational process of DNA repair. It may act with RecF and RecO. This chain is Recombination protein RecR, found in Allorhizobium ampelinum (strain ATCC BAA-846 / DSM 112012 / S4) (Agrobacterium vitis (strain S4)).